Reading from the N-terminus, the 391-residue chain is Phosphoglycerate kinase (391 aa).

Residues Asp-21 to Asn-23, Arg-36, His-59 to Arg-62, Arg-113, and Arg-146 contribute to the substrate site. Residues Lys-197, Glu-319, and Gly-345–Thr-348 contribute to the ATP site.

The protein belongs to the phosphoglycerate kinase family. As to quaternary structure, monomer.

The protein localises to the cytoplasm. The catalysed reaction is (2R)-3-phosphoglycerate + ATP = (2R)-3-phospho-glyceroyl phosphate + ADP. The protein operates within carbohydrate degradation; glycolysis; pyruvate from D-glyceraldehyde 3-phosphate: step 2/5. The sequence is that of Phosphoglycerate kinase from Colwellia psychrerythraea (strain 34H / ATCC BAA-681) (Vibrio psychroerythus).